The primary structure comprises 210 residues: ATP-dependent Clp protease proteolytic subunit (210 aa).

Serine 107 acts as the Nucleophile in catalysis. Histidine 132 is a catalytic residue.

Belongs to the peptidase S14 family. Fourteen ClpP subunits assemble into 2 heptameric rings which stack back to back to give a disk-like structure with a central cavity, resembling the structure of eukaryotic proteasomes.

The protein localises to the cytoplasm. It catalyses the reaction Hydrolysis of proteins to small peptides in the presence of ATP and magnesium. alpha-casein is the usual test substrate. In the absence of ATP, only oligopeptides shorter than five residues are hydrolyzed (such as succinyl-Leu-Tyr-|-NHMec, and Leu-Tyr-Leu-|-Tyr-Trp, in which cleavage of the -Tyr-|-Leu- and -Tyr-|-Trp bonds also occurs).. Its function is as follows. Cleaves peptides in various proteins in a process that requires ATP hydrolysis. Has a chymotrypsin-like activity. Plays a major role in the degradation of misfolded proteins. The polypeptide is ATP-dependent Clp protease proteolytic subunit (Azorhizobium caulinodans (strain ATCC 43989 / DSM 5975 / JCM 20966 / LMG 6465 / NBRC 14845 / NCIMB 13405 / ORS 571)).